The chain runs to 1022 residues: Protein trachealess (1022 aa).

Residues 86–139 form the bHLH domain; that stretch reads LRKEKSRDAARSRRGKENYEFYELAKMLPLPAAITSQLDKASIIRLTISYLKLR. One can recognise a PAS 1 domain in the interval 174 to 244; sequence EQHQGTHILQ…DQLGLSLTSG (71 aa). A disordered region spans residues 239 to 289; the sequence is LSLTSGGGGGGGSSSSGGGGGGAGGGMASPTSGASDDGSGTHGTNNPDVAA. Over residues 243 to 265 the composition is skewed to gly residues; the sequence is SGGGGGGGSSSSGGGGGGAGGGM. Polar residues predominate over residues 280–289; sequence HGTNNPDVAA. The PAS 2 domain maps to 391 to 461; the sequence is PPPSVHEIRL…KSHSDLIEKG (71 aa). The 44-residue stretch at 465–508 folds into the PAC domain; that stretch reads TGYYRLMNKSGGYTWLQTCATVVCSTKNADEQNIICVNYVISNR. Disordered stretches follow at residues 525–686, 849–896, and 962–996; these read DSIK…ADSA, AMTP…GDVV, and DDQG…ASQA. Low complexity-rich tracts occupy residues 578 to 587 and 611 to 625; these read RSAAASHGSS and PTTV…TPPV. Positions 629–636 match the Nuclear localization signal motif; it reads KRKRKTKA. A Phosphoserine; by PKB/Akt1 modification is found at S673. Over residues 851–864 the composition is skewed to polar residues; it reads TPPSSVSPRDSNQP. Low complexity predominate over residues 987 to 996; that stretch reads GSAGSSASQA.

Efficient DNA binding requires dimerization with another bHLH protein. Heterodimer with tgo. In terms of processing, ser-673 phosphorylation by PKB/Akt1 is required for nuclear targeting and transcriptional activity. Trachea, salivary gland ducts, posterior spiracles (Filzkoeper primordia) and a subset of cells in the CNS.

It is found in the nucleus. Functionally, transcription factor, master regulator of tracheal cell fates in the embryo, necessary for the development of the salivary gland duct, Malpighian tubules and the posterior spiracles. It may induce a general fate of branched tubular structures of epithelial origin. Functions with tgo to regulate expression of btl. In Drosophila melanogaster (Fruit fly), this protein is Protein trachealess (trh).